The sequence spans 190 residues: Proline-rich protein 3 (190 aa).

Disordered regions lie at residues 1–94 (MPKR…GLGP), 110–130 (PPFP…KEAR), and 142–161 (KNTY…SDRP). Residues 37–48 (MGPPSLLGPPPM) show a composition bias toward pro residues. A C3H1-type zinc finger spans residues 157-185 (KSDRPVCRHFSKKGHCRYEDHCAFYHPGV).

The chain is Proline-rich protein 3 (Prr3) from Mus musculus (Mouse).